A 118-amino-acid polypeptide reads, in one-letter code: Large ribosomal subunit protein bL20 (118 aa).

The protein belongs to the bacterial ribosomal protein bL20 family.

In terms of biological role, binds directly to 23S ribosomal RNA and is necessary for the in vitro assembly process of the 50S ribosomal subunit. It is not involved in the protein synthesizing functions of that subunit. The sequence is that of Large ribosomal subunit protein bL20 from Desulfotalea psychrophila (strain LSv54 / DSM 12343).